Here is a 216-residue protein sequence, read N- to C-terminus: Adenylate kinase (216 aa).

Gly-10–Thr-15 lines the ATP pocket. Positions Ser-30 to Ile-59 are NMP. Residues Thr-31, Arg-36, Lys-57–Ile-59, Gly-85–Arg-88, and Gln-92 contribute to the AMP site. The segment at Gly-121–Asp-158 is LID. ATP-binding positions include Arg-122 and Thr-131–Tyr-132. Positions 155 and 166 each coordinate AMP. Gln-196 is an ATP binding site.

The protein belongs to the adenylate kinase family. As to quaternary structure, monomer.

The protein resides in the cytoplasm. It carries out the reaction AMP + ATP = 2 ADP. It participates in purine metabolism; AMP biosynthesis via salvage pathway; AMP from ADP: step 1/1. Functionally, catalyzes the reversible transfer of the terminal phosphate group between ATP and AMP. Plays an important role in cellular energy homeostasis and in adenine nucleotide metabolism. The protein is Adenylate kinase of Buchnera aphidicola subsp. Cinara cedri (strain Cc).